The following is a 140-amino-acid chain: Large ribosomal subunit protein uL11 (140 aa).

This sequence belongs to the universal ribosomal protein uL11 family. Part of the ribosomal stalk of the 50S ribosomal subunit. Interacts with L10 and the large rRNA to form the base of the stalk. L10 forms an elongated spine to which L12 dimers bind in a sequential fashion forming a multimeric L10(L12)X complex. In terms of processing, one or more lysine residues are methylated.

Its function is as follows. Forms part of the ribosomal stalk which helps the ribosome interact with GTP-bound translation factors. This Dehalococcoides mccartyi (strain ATCC BAA-2266 / KCTC 15142 / 195) (Dehalococcoides ethenogenes (strain 195)) protein is Large ribosomal subunit protein uL11.